Consider the following 308-residue polypeptide: Apolipoprotein E (308 aa).

The signal sequence occupies residues 1–18 (MKFLWAALVVTLLAGCRA). Repeat copies occupy residues 75 to 96 (LLIE…KQVG), 97 to 118 (PIAQ…ARLE), 119 to 140 (SDME…AALG), 141 to 162 (QNTD…KRLL), 163 to 184 (RDAE…EAAE), 185 to 206 (RGVS…LQAI), 207 to 224 (PPSQ…QKVR), and 225 to 246 (GRLE…DQME). Residues 75–246 (LLIEETMKEV…RLDDMRDQME (172 aa)) are 8 X 22 AA approximate tandem repeats. Positions 153–163 (HLRKLRKRLLR) are LDL and other lipoprotein receptors binding. Heparin is bound at residue 157–160 (LRKR). The interval 205 to 281 (AIPPSQQLRE…SWFEPLVQDM (77 aa)) is lipid-binding and lipoprotein association. 220–227 (GQKVRGRL) contributes to the heparin binding site. Residues 257–308 (SQVRLQAEAFQTRLKSWFEPLVQDMQRQWASLVEKVQSTLGISPSTKPSKTK) form a homooligomerization region. The segment at 269-281 (RLKSWFEPLVQDM) is specificity for association with VLDL.

Belongs to the apolipoprotein A1/A4/E family. In terms of assembly, homotetramer. May interact with ABCA1; functionally associated with ABCA1 in the biogenesis of HDLs. May interact with APP/A4 amyloid-beta peptide; the interaction is extremely stable in vitro but its physiological significance is unclear. May interact with MAPT. May interact with MAP2. In the cerebrospinal fluid, interacts with secreted SORL1. Interacts with PMEL; this allows the loading of PMEL luminal fragment on ILVs to induce fibril nucleation. Post-translationally, APOE exists as multiple glycosylated and sialylated glycoforms within cells and in plasma. The extent of glycosylation and sialylation are tissue and context specific. Glycated in plasma VLDL. In terms of processing, phosphorylated by FAM20C in the extracellular medium.

It localises to the secreted. It is found in the extracellular space. The protein resides in the extracellular matrix. The protein localises to the extracellular vesicle. Its subcellular location is the endosome. It localises to the multivesicular body. Its function is as follows. APOE is an apolipoprotein, a protein associating with lipid particles, that mainly functions in lipoprotein-mediated lipid transport between organs via the plasma and interstitial fluids. APOE is a core component of plasma lipoproteins and is involved in their production, conversion and clearance. Apolipoproteins are amphipathic molecules that interact both with lipids of the lipoprotein particle core and the aqueous environment of the plasma. As such, APOE associates with chylomicrons, chylomicron remnants, very low density lipoproteins (VLDL) and intermediate density lipoproteins (IDL) but shows a preferential binding to high-density lipoproteins (HDL). It also binds a wide range of cellular receptors including the LDL receptor/LDLR and the very low-density lipoprotein receptor/VLDLR that mediate the cellular uptake of the APOE-containing lipoprotein particles. Finally, APOE also has a heparin-binding activity and binds heparan-sulfate proteoglycans on the surface of cells, a property that supports the capture and the receptor-mediated uptake of APOE-containing lipoproteins by cells. This chain is Apolipoprotein E (APOE), found in Pteropus vampyrus (Large flying fox).